A 131-amino-acid polypeptide reads, in one-letter code: UPF0102 protein YraN (131 aa).

Over residues 1-19 (MATVPTRSGSPRQLTTKQT) the composition is skewed to polar residues. Positions 1–20 (MATVPTRSGSPRQLTTKQTG) are disordered.

It belongs to the UPF0102 family.

This chain is UPF0102 protein YraN, found in Escherichia coli O157:H7.